The sequence spans 627 residues: Protein fem-1 homolog B (627 aa).

ANK repeat units follow at residues 45–74 (QRST…VQTQ), 87–116 (DGAT…NVNH), 120–149 (TNST…NISI), and 153–182 (YDNT…DPNA). Zn(2+)-binding residues include histidine 185, cysteine 186, and histidine 218. ANK repeat units lie at residues 186–215 (CGAT…AIVV) and 218–248 (HGMT…DRRS). The stretch at 344–377 (SHPIIYRGAVYADNMEFEQCIKLWLHALHLRQKG) is one TPR repeat. 2 ANK repeats span residues 483-527 (EGFT…EVNA) and 531-568 (EGNS…HTDM).

This sequence belongs to the fem-1 family. As to quaternary structure, component of a CRL2 E3 ubiquitin-protein ligase complex, also named ECS (Elongin BC-CUL2/5-SOCS-box protein) complex, composed of CUL2, Elongin BC (ELOB and ELOC), RBX1 and substrate-specific adapter FEM1B. Homooligomer. Interacts with PPM1F and PHTF1. Interacts with the death domain of FAS/TNFRSF6 and TNFRSF1A. Interacts with CHEK1. Interacts with NKX3-1. In terms of tissue distribution, present in adult testis (at protein level).

It localises to the cytoplasm. The protein resides in the nucleus. It functions in the pathway protein modification; protein ubiquitination. With respect to regulation, activity of the CRL2(FEM1B) complex toward FNIP1 is inhibited by BEX family proteins (BEX1, BEX2, BEX3 and/or BEX4) in absence of reductive stress. Mechanistically, BEX proteins act as pseudosubstrate inhibitors that associate with FEM1B via zinc in absence of reductive stress, thereby preventing association between FEM1B and FNIP1. Its function is as follows. Substrate-recognition component of a Cul2-RING (CRL2) E3 ubiquitin-protein ligase complex of the DesCEND (destruction via C-end degrons) pathway, which recognizes a C-degron located at the extreme C terminus of target proteins, leading to their ubiquitination and degradation. The C-degron recognized by the DesCEND pathway is usually a motif of less than ten residues and can be present in full-length proteins, truncated proteins or proteolytically cleaved forms. The CRL2(FEM1B) complex specifically recognizes proteins ending with -Gly-Leu-Asp-Arg, such as CDK5R1, leading to their ubiquitination and degradation. Also acts as a regulator of the reductive stress response by mediating ubiquitination of reduced FNIP1: in response to reductive stress, the CRL2(FEM1B) complex specifically recognizes a conserved Cys degron in FNIP1 when this degron is reduced, leading to FNIP1 degradation and subsequent activation of mitochondria to recalibrate reactive oxygen species (ROS). Mechanistically, recognizes and binds reduced FNIP1 through two interface zinc ions, which act as a molecular glue that recruit reduced FNIP1 to FEM1B. Promotes ubiquitination of GLI1, suppressing GLI1 transcriptional activator activity. Promotes ubiquitination and degradation of ANKRD37. Promotes ubiquitination and degradation of SLBP. Involved in apoptosis by acting as a death receptor-associated protein that mediates apoptosis. Also involved in glucose homeostasis in pancreatic islet. May also act as an adapter/mediator in replication stress-induced signaling that leads to the activation of CHEK1. The sequence is that of Protein fem-1 homolog B from Rattus norvegicus (Rat).